The sequence spans 257 residues: Septu protein PtuB (257 aa).

Residues 49 to 96 (CVYCECRLDEESKYMEVEHFLPKDTYPNLVVNWRNLLPSCKRCNGKKG) form the HNH domain.

Functionally, component of antiviral defense system Septu type I, composed of PtuA and PtuB. Expression of Septu type I in B.subtilis (strain BEST7003) confers resistance to phages SBSphiC and SBSphiJ. May be a nuclease. The protein is Septu protein PtuB of Bacillus thuringiensis.